The chain runs to 554 residues: MSNNSFTNFKLATELPAWSKLQKIYESQGKTLSVKQEFQKDAKRFEKLNKTFTNYDGSKILFDYSKNLVNDEIIAALIELAKEANVTGLRDAMFKGEHINSTEDRAVYHVALRNRANKPMYVDGVNVAPEVDSVLKHMKEFSEQVRSGEWKGYTGKKITDVVNIGIGGSDLGPVMVTEALKHYAGVLDVHFVSNIDGTHIAETLKVVDPETTLFLIASKTFTTAETITNANTAKNWFLSKTGNDPSHIAKHFAALSTNETEVAKFGIDTKNMFGFESWVGGRYSVWSAIGLSVALYIGYDNFEAFLKGAEAVDNHFTQTPLEDNIPLLGGLLSVWYNNFFGAQTHLVAPFDQYLHRFPAYLQQLSMESNGKSVTRGNVFTDYSTGSILFGEPATNAQHSFFQLVHQGTKLIPSDFILAAQSHNPIENKLHQKMLASNFFAQAEALMVGKDEEQVKAEGATGGLVPHKVFSGNRPTTSILAQKITPATLGALIAYYEHVTFTEGAIWNINSFDQWGVELGKVLAKVIGKELDNSSTISTHDASTNGLINQFKEWM.

The residue at position 2 (Ser-2) is an N-acetylserine. At Thr-53 the chain carries Phosphothreonine. D-glucose 6-phosphate contacts are provided by residues 168–169 (GS), 218–223 (SKTFTT), Gln-363, Glu-367, His-398, and Lys-520. Phosphothreonine is present on Thr-220. The Proton donor role is filled by Glu-367. Active-site residues include His-398 and Lys-520.

This sequence belongs to the GPI family. As to quaternary structure, homodimer.

It is found in the cytoplasm. Its subcellular location is the cytosol. The catalysed reaction is alpha-D-glucose 6-phosphate = beta-D-fructose 6-phosphate. It functions in the pathway carbohydrate degradation; glycolysis; D-glyceraldehyde 3-phosphate and glycerone phosphate from D-glucose: step 2/4. Its activity is regulated as follows. Strongly inhibited by the polyol (sugar alcohol) phosphate D-glucitol 6-phosphate (D-sorbitol 6-phosphate). Also inhibited by the polyol (sugar alcohol) phosphate D-ribitol 5-phosphate. Functionally, in the cytoplasm, catalyzes the conversion of glucose-6-phosphate to fructose-6-phosphate, the second step in glycolysis, and the reverse reaction during gluconeogenesis. The chain is Glucose-6-phosphate isomerase (PGI1) from Saccharomyces cerevisiae (strain ATCC 204508 / S288c) (Baker's yeast).